An 88-amino-acid chain; its full sequence is Small ribosomal subunit protein bS16 (88 aa).

The protein belongs to the bacterial ribosomal protein bS16 family.

The polypeptide is Small ribosomal subunit protein bS16 (Symbiobacterium thermophilum (strain DSM 24528 / JCM 14929 / IAM 14863 / T)).